Here is a 295-residue protein sequence, read N- to C-terminus: Aquaporin-9 (295 aa).

Over 1 to 24 (MPSEKDRAKKNLVQRLALKSCLAK) the chain is Cytoplasmic. The chain crosses the membrane as a helical span at residues 25 to 43 (ETLSEFLGTFIMIVLGCGS). Over 44-57 (IAQAVLSREKAGGI) the chain is Extracellular. Residues 58-77 (ITINIGFATAVVMALYATFG) form a helical membrane-spanning segment. Over 78-79 (VS) the chain is Cytoplasmic. Positions 80–92 (GGHINPAVSFAMC) form an intramembrane region, discontinuously helical. Positions 84–86 (NPA) match the NPA 1 motif. At 93–98 (TFGRME) the chain is on the cytoplasmic side. A helical transmembrane segment spans residues 99-123 (WFKFPFYVGAQLLGAFVGAATVFGI). Topologically, residues 124–160 (YYDGLMAFADGKLLITGENGTAFIFATYPKPFVSVPG) are extracellular. Residues 161-178 (AFVDQVVSTMFLLLIVFA) form a helical membrane-spanning segment. The Cytoplasmic portion of the chain corresponds to 179–190 (IFDSRNLGVPRG). A helical membrane pass occupies residues 191–207 (LEPIVIGLLIIVISCSL). Topologically, residues 208-210 (GLN) are extracellular. The discontinuously helical intramembrane region spans 211-225 (SGCAMNPARDLSPRL). The short motif at 216 to 218 (NPA) is the NPA 2 element. Residues 226–243 (FTALAGWGFEVFTFGNNF) lie on the Extracellular side of the membrane. The helical transmembrane segment at 244–264 (WWIPVVGPMIGAVLGGLIYVL) threads the bilayer. Residues 265–295 (FIQMHHSNPDPEVKAEPAENNLEKHELSVIM) lie on the Cytoplasmic side of the membrane.

It belongs to the MIP/aquaporin (TC 1.A.8) family. Homotetramer; each monomer provides an independent glycerol/water pore.

The protein localises to the cell membrane. It localises to the basolateral cell membrane. The catalysed reaction is glycerol(in) = glycerol(out). It catalyses the reaction H2O(in) = H2O(out). It carries out the reaction urea(in) = urea(out). The enzyme catalyses (S)-lactate(in) = (S)-lactate(out). The catalysed reaction is NH4(+)(in) = NH4(+)(out). It catalyses the reaction uracil(in) = uracil(out). It carries out the reaction adenine(out) = adenine(in). The enzyme catalyses 3-hydroxybutanoate(in) = 3-hydroxybutanoate(out). The catalysed reaction is D-sorbitol(in) = D-sorbitol(out). It catalyses the reaction D-mannitol(in) = D-mannitol(out). It carries out the reaction H2O2(out) = H2O2(in). The enzyme catalyses arsenite(in) = arsenite(out). The catalysed reaction is selenite(in) = selenite(out). Aquaglyceroporins form homotetrameric transmembrane channels, with each monomer independently mediating glycerol and water transport across the plasma membrane along their osmotic gradient. AQP9 is the primary route for glycerol uptake in hepatocytes, supporting hepatic gluconeogenesis. It exhibits broad specificity and may transport various small, non-charged solutes, including carbamides, polyols, purines, and pyrimidines. AQP9 may also facilitate hepatic urea extrusion. Due to its permeability to lactate, AQP9 might participate in the astrocyte-to-neuron lactate shuttle, supplying neurons with energy. Additionally, AQP9 is permeable to arsenite, contributing to arsenic excretion by the liver and providing partial protection against arsenic toxicity. It is also permeable to H2O2 in vivo. Could also be permeable to ammonium. The polypeptide is Aquaporin-9 (Mus musculus (Mouse)).